The sequence spans 459 residues: Cysteine--tRNA ligase (459 aa).

Cysteine 28 contacts Zn(2+). The 'HIGH' region signature appears at 30 to 40; sequence ITIYDLCHIGH. 3 residues coordinate Zn(2+): cysteine 209, histidine 234, and glutamate 238. The short motif at 266-270 is the 'KMSKS' region element; the sequence is KMSKS. Lysine 269 is a binding site for ATP.

It belongs to the class-I aminoacyl-tRNA synthetase family. In terms of assembly, monomer. It depends on Zn(2+) as a cofactor.

It is found in the cytoplasm. The catalysed reaction is tRNA(Cys) + L-cysteine + ATP = L-cysteinyl-tRNA(Cys) + AMP + diphosphate. The sequence is that of Cysteine--tRNA ligase from Shewanella denitrificans (strain OS217 / ATCC BAA-1090 / DSM 15013).